Reading from the N-terminus, the 415-residue chain is Glucose-1-phosphate adenylyltransferase (415 aa).

Alpha-D-glucose 1-phosphate contacts are provided by residues Y100, G165, 182–183, and S200; that span reads EK.

It belongs to the bacterial/plant glucose-1-phosphate adenylyltransferase family. Homotetramer.

It carries out the reaction alpha-D-glucose 1-phosphate + ATP + H(+) = ADP-alpha-D-glucose + diphosphate. It functions in the pathway glycan biosynthesis; glycogen biosynthesis. Involved in the biosynthesis of ADP-glucose, a building block required for the elongation reactions to produce glycogen. Catalyzes the reaction between ATP and alpha-D-glucose 1-phosphate (G1P) to produce pyrophosphate and ADP-Glc. The protein is Glucose-1-phosphate adenylyltransferase of Bifidobacterium animalis subsp. lactis (strain AD011).